We begin with the raw amino-acid sequence, 342 residues long: L-threonine 3-dehydrogenase (342 aa).

Cysteine 38 contacts Zn(2+). Catalysis depends on charge relay system residues threonine 40 and histidine 43. Zn(2+)-binding residues include histidine 63, glutamate 64, cysteine 93, cysteine 96, cysteine 99, and cysteine 107. Residues isoleucine 175, aspartate 195, arginine 200, 262 to 264 (LGI), and 286 to 287 (IY) contribute to the NAD(+) site.

The protein belongs to the zinc-containing alcohol dehydrogenase family. Homotetramer. Zn(2+) is required as a cofactor.

The protein localises to the cytoplasm. The catalysed reaction is L-threonine + NAD(+) = (2S)-2-amino-3-oxobutanoate + NADH + H(+). Its pathway is amino-acid degradation; L-threonine degradation via oxydo-reductase pathway; glycine from L-threonine: step 1/2. Catalyzes the NAD(+)-dependent oxidation of L-threonine to 2-amino-3-ketobutyrate. This chain is L-threonine 3-dehydrogenase, found in Burkholderia cenocepacia (strain HI2424).